A 348-amino-acid polypeptide reads, in one-letter code: Protein lifeguard 1 (348 aa).

The disordered stretch occupies residues 1–118 (MSHEKSFLVS…GNYQEEGPPS (118 aa)). Pro residues predominate over residues 14 to 41 (YPPPNPGYPVGPQAPMPPYVQPPYPGAP). Residues 42-57 (YPQAAFQPSPYGQPGY) show a composition bias toward low complexity. Pro residues predominate over residues 82 to 101 (GPYPQSPFPPNPYGQPPPFQ). Helical transmembrane passes span 142–162 (VFLVLTLQLSVTLSTVAIFTF), 174–194 (VWTYYVSYAIFFISLIVLSCC), 205–225 (LVALSILTISLSYMVGMIASF), 230–250 (AVIMAVGITTAVCFTVVIFSM), 260–280 (MGVLLVSVVVLFIFAILCIFI), 284–304 (ILEIVYASLGALLFTCFLAVD), and 323–343 (FAALNLYTDIINIFLYILTII).

It belongs to the BI1 family. LFG subfamily.

The protein resides in the membrane. Functionally, potential apoptotic regulator. This Rattus norvegicus (Rat) protein is Protein lifeguard 1 (Grina).